The following is a 243-amino-acid chain: Type III pantothenate kinase (243 aa).

ATP is bound at residue 6–13 (DIGNTNLK). Residue 101–104 (GSDI) participates in substrate binding. Asp103 (proton acceptor) is an active-site residue. Thr125 contributes to the ATP binding site. Thr176 serves as a coordination point for substrate.

This sequence belongs to the type III pantothenate kinase family. As to quaternary structure, homodimer. The cofactor is NH4(+). It depends on K(+) as a cofactor.

It localises to the cytoplasm. The enzyme catalyses (R)-pantothenate + ATP = (R)-4'-phosphopantothenate + ADP + H(+). The protein operates within cofactor biosynthesis; coenzyme A biosynthesis; CoA from (R)-pantothenate: step 1/5. Its function is as follows. Catalyzes the phosphorylation of pantothenate (Pan), the first step in CoA biosynthesis. The protein is Type III pantothenate kinase of Mycoplasma mobile (strain ATCC 43663 / 163K / NCTC 11711) (Mesomycoplasma mobile).